The following is a 177-amino-acid chain: MSRVAKNPVTVPAGVEVKFGTEALVIKGKNGELSFPLHSDVAIEFNDGKLTFVANNSSKQANAMSGTARALVSNMVKGVSEGFEKKLQLMGVGYRAQAQGKILNLSLGFSHPIVYEMPEGVSVQTPSQTEIVLTGSDKQVVGQVASEIRAFRAPEPYKGKGVRYVGEVVVMKEAKKK.

It belongs to the universal ribosomal protein uL6 family. In terms of assembly, part of the 50S ribosomal subunit.

Functionally, this protein binds to the 23S rRNA, and is important in its secondary structure. It is located near the subunit interface in the base of the L7/L12 stalk, and near the tRNA binding site of the peptidyltransferase center. In Neisseria gonorrhoeae (strain ATCC 700825 / FA 1090), this protein is Large ribosomal subunit protein uL6.